The sequence spans 312 residues: DNA primase small subunit PriS (312 aa).

Residues Asp88, Asp90, and Asp215 contribute to the active site.

The protein belongs to the eukaryotic-type primase small subunit family. As to quaternary structure, heterodimer of a small subunit (PriS) and a large subunit (PriL). The cofactor is Mg(2+). Requires Mn(2+) as cofactor.

Functionally, catalytic subunit of DNA primase, an RNA polymerase that catalyzes the synthesis of short RNA molecules used as primers for DNA polymerase during DNA replication. The small subunit contains the primase catalytic core and has DNA synthesis activity on its own. Binding to the large subunit stabilizes and modulates the activity, increasing the rate of DNA synthesis while decreasing the length of the DNA fragments, and conferring RNA synthesis capability. The DNA polymerase activity may enable DNA primase to also catalyze primer extension after primer synthesis. May also play a role in DNA repair. The protein is DNA primase small subunit PriS of Pyrobaculum calidifontis (strain DSM 21063 / JCM 11548 / VA1).